A 355-amino-acid chain; its full sequence is G protein alpha i subunit (355 aa).

The N-myristoyl glycine moiety is linked to residue Gly2. Cys3 carries S-palmitoyl cysteine lipidation. Residues 33 to 355 enclose the G-alpha domain; the sequence is SEVKLLLLGA…KNNLKQIGLF (323 aa). Positions 36-49 are G1 motif; it reads KLLLLGAGESGKST. GTP-binding positions include 41–48, 176–182, 201–205, 270–273, and Ala327; these read GAGESGKS, LRTRVKT, DVGGQ, and NKKD. Residues Ser48 and Thr182 each coordinate Mg(2+). Positions 174-182 are G2 motif; the sequence is DVLRTRVKT. The G3 motif stretch occupies residues 197–206; sequence FKLFDVGGQR. A G4 motif region spans residues 266-273; that stretch reads ILFLNKKD. A G5 motif region spans residues 325–330; it reads TCATDT.

This sequence belongs to the G-alpha family. G(i/o/t/z) subfamily. In terms of assembly, g proteins are composed of 3 units; alpha, beta and gamma. The alpha chain contains the guanine nucleotide binding site. Interacts (via GDP- or GTP-bound forms) with loco (via GoLoco and RGS domains). Interacts with raps/pins.

It localises to the cell membrane. The protein resides in the apical cell membrane. Functionally, guanine nucleotide-binding proteins (G proteins) are involved as modulators or transducers in various transmembrane signaling systems. Plays a role in glial cell differentiation during embryogenesis; loco, Galphao and the G-protein coupled receptor, moody, are required in the surface glia to achieve effective insulation of the nerve cord. The sequence is that of G protein alpha i subunit (Galphai) from Drosophila melanogaster (Fruit fly).